Here is a 492-residue protein sequence, read N- to C-terminus: GTPase Obg (492 aa).

An Obg domain is found at 2–159 (PRFVDRVVIH…RELTLELKTV (158 aa)). Residues 160-340 (ADVGLIGFPS…LIFGLWQMIS (181 aa)) form the OBG-type G domain. Residues 166 to 173 (GFPSAGKS), 191 to 195 (FTTLV), 212 to 215 (DVPG), 292 to 295 (NKID), and 321 to 323 (STV) contribute to the GTP site. Residues Ser173 and Thr193 each contribute to the Mg(2+) site. Positions 358–438 (PVPVDDSGFR…IGDMTFDWEP (81 aa)) constitute an OCT domain. Residues 441–492 (PAGQQVVLSGRGTDARLERTERVGAAERKAARRQRRTGDDAERGTTERGENT) form a disordered region. Basic and acidic residues-rich tracts occupy residues 453 to 469 (TDARLERTERVGAAERK) and 476 to 492 (RTGDDAERGTTERGENT).

This sequence belongs to the TRAFAC class OBG-HflX-like GTPase superfamily. OBG GTPase family. In terms of assembly, monomer. Mg(2+) is required as a cofactor.

Its subcellular location is the cytoplasm. In terms of biological role, an essential GTPase which binds GTP, GDP and possibly (p)ppGpp with moderate affinity, with high nucleotide exchange rates and a fairly low GTP hydrolysis rate. Plays a role in control of the cell cycle, stress response, ribosome biogenesis and in those bacteria that undergo differentiation, in morphogenesis control. This is GTPase Obg from Mycolicibacterium paratuberculosis (strain ATCC BAA-968 / K-10) (Mycobacterium paratuberculosis).